A 448-amino-acid chain; its full sequence is tRNA(Ile)-lysidine synthase (448 aa).

Residue 27–32 (SGGVDS) coordinates ATP.

The protein belongs to the tRNA(Ile)-lysidine synthase family.

It localises to the cytoplasm. It catalyses the reaction cytidine(34) in tRNA(Ile2) + L-lysine + ATP = lysidine(34) in tRNA(Ile2) + AMP + diphosphate + H(+). In terms of biological role, ligates lysine onto the cytidine present at position 34 of the AUA codon-specific tRNA(Ile) that contains the anticodon CAU, in an ATP-dependent manner. Cytidine is converted to lysidine, thus changing the amino acid specificity of the tRNA from methionine to isoleucine. The protein is tRNA(Ile)-lysidine synthase of Vibrio campbellii (strain ATCC BAA-1116).